The chain runs to 38 residues: Large ribosomal subunit protein bL36 (38 aa).

It belongs to the bacterial ribosomal protein bL36 family.

This chain is Large ribosomal subunit protein bL36, found in Stutzerimonas stutzeri (strain A1501) (Pseudomonas stutzeri).